Reading from the N-terminus, the 159-residue chain is 2-C-methyl-D-erythritol 2,4-cyclodiphosphate synthase (159 aa).

A divalent metal cation-binding residues include Asp-8 and His-10. 4-CDP-2-C-methyl-D-erythritol 2-phosphate contacts are provided by residues 8–10 (DVH) and 34–35 (HS). Residue His-42 participates in a divalent metal cation binding. 4-CDP-2-C-methyl-D-erythritol 2-phosphate is bound by residues 56-58 (DIG), 61-65 (FPDTD), 100-106 (AQAPKML), 132-135 (TTTE), Phe-139, and Arg-142.

The protein belongs to the IspF family. As to quaternary structure, homotrimer. A divalent metal cation serves as cofactor.

The enzyme catalyses 4-CDP-2-C-methyl-D-erythritol 2-phosphate = 2-C-methyl-D-erythritol 2,4-cyclic diphosphate + CMP. The protein operates within isoprenoid biosynthesis; isopentenyl diphosphate biosynthesis via DXP pathway; isopentenyl diphosphate from 1-deoxy-D-xylulose 5-phosphate: step 4/6. Involved in the biosynthesis of isopentenyl diphosphate (IPP) and dimethylallyl diphosphate (DMAPP), two major building blocks of isoprenoid compounds. Catalyzes the conversion of 4-diphosphocytidyl-2-C-methyl-D-erythritol 2-phosphate (CDP-ME2P) to 2-C-methyl-D-erythritol 2,4-cyclodiphosphate (ME-CPP) with a corresponding release of cytidine 5-monophosphate (CMP). The sequence is that of 2-C-methyl-D-erythritol 2,4-cyclodiphosphate synthase from Salmonella dublin (strain CT_02021853).